The sequence spans 264 residues: Thymidylate synthase (264 aa).

DUMP-binding positions include Arg21 and Arg126 to Arg127. Cys146 (nucleophile) is an active-site residue. DUMP-binding positions include Arg166–Asp169, Asn177, and His207–Tyr209. (6R)-5,10-methylene-5,6,7,8-tetrahydrofolate is bound at residue Asp169. Position 263 (Ala263) interacts with (6R)-5,10-methylene-5,6,7,8-tetrahydrofolate.

Belongs to the thymidylate synthase family. Bacterial-type ThyA subfamily. In terms of assembly, homodimer.

The protein resides in the cytoplasm. The enzyme catalyses dUMP + (6R)-5,10-methylene-5,6,7,8-tetrahydrofolate = 7,8-dihydrofolate + dTMP. The protein operates within pyrimidine metabolism; dTTP biosynthesis. Its function is as follows. Catalyzes the reductive methylation of 2'-deoxyuridine-5'-monophosphate (dUMP) to 2'-deoxythymidine-5'-monophosphate (dTMP) while utilizing 5,10-methylenetetrahydrofolate (mTHF) as the methyl donor and reductant in the reaction, yielding dihydrofolate (DHF) as a by-product. This enzymatic reaction provides an intracellular de novo source of dTMP, an essential precursor for DNA biosynthesis. This Halorhodospira halophila (strain DSM 244 / SL1) (Ectothiorhodospira halophila (strain DSM 244 / SL1)) protein is Thymidylate synthase.